A 728-amino-acid chain; its full sequence is 1,4-alpha-glucan branching enzyme GlgB (728 aa).

The active-site Nucleophile is Asp-405. Glu-458 serves as the catalytic Proton donor.

Belongs to the glycosyl hydrolase 13 family. GlgB subfamily. In terms of assembly, monomer.

It carries out the reaction Transfers a segment of a (1-&gt;4)-alpha-D-glucan chain to a primary hydroxy group in a similar glucan chain.. It functions in the pathway glycan biosynthesis; glycogen biosynthesis. Functionally, catalyzes the formation of the alpha-1,6-glucosidic linkages in glycogen by scission of a 1,4-alpha-linked oligosaccharide from growing alpha-1,4-glucan chains and the subsequent attachment of the oligosaccharide to the alpha-1,6 position. This is 1,4-alpha-glucan branching enzyme GlgB from Salmonella paratyphi A (strain ATCC 9150 / SARB42).